The chain runs to 330 residues: tRNA U34 carboxymethyltransferase (330 aa).

Carboxy-S-adenosyl-L-methionine contacts are provided by residues Lys98, Trp112, Lys117, Gly137, 187–188 (ME), Met203, Tyr207, and Arg322. The segment at 309–330 (NPSKTIEGYPGPKRATLIAEKP) is disordered.

The protein belongs to the class I-like SAM-binding methyltransferase superfamily. CmoB family. In terms of assembly, homotetramer.

It catalyses the reaction carboxy-S-adenosyl-L-methionine + 5-hydroxyuridine(34) in tRNA = 5-carboxymethoxyuridine(34) in tRNA + S-adenosyl-L-homocysteine + H(+). Catalyzes carboxymethyl transfer from carboxy-S-adenosyl-L-methionine (Cx-SAM) to 5-hydroxyuridine (ho5U) to form 5-carboxymethoxyuridine (cmo5U) at position 34 in tRNAs. The sequence is that of tRNA U34 carboxymethyltransferase from Marinobacter nauticus (strain ATCC 700491 / DSM 11845 / VT8) (Marinobacter aquaeolei).